We begin with the raw amino-acid sequence, 153 residues long: Large ribosomal subunit protein uL13 (153 aa).

It belongs to the universal ribosomal protein uL13 family. In terms of assembly, part of the 50S ribosomal subunit.

In terms of biological role, this protein is one of the early assembly proteins of the 50S ribosomal subunit, although it is not seen to bind rRNA by itself. It is important during the early stages of 50S assembly. This Xanthobacter autotrophicus (strain ATCC BAA-1158 / Py2) protein is Large ribosomal subunit protein uL13.